Here is a 171-residue protein sequence, read N- to C-terminus: Serine acetyltransferase (171 aa).

The protein belongs to the transferase hexapeptide repeat family.

Its subcellular location is the cytoplasm. The enzyme catalyses L-serine + acetyl-CoA = O-acetyl-L-serine + CoA. It participates in amino-acid biosynthesis; L-cysteine biosynthesis; L-cysteine from L-serine: step 1/2. The polypeptide is Serine acetyltransferase (cysE) (Helicobacter pylori (strain ATCC 700392 / 26695) (Campylobacter pylori)).